Consider the following 541-residue polypeptide: Transcription termination factor MTERF4, chloroplastic (541 aa).

A chloroplast-targeting transit peptide spans 1–45 (MKIRFCNGFTKPGFLLVHFEPPSFFAVRSRSLSDSTYGNLCNHKK). Disordered regions lie at residues 66-103 (SRSLDSPRRERSSRSSSSSGRDRDRDKDKGRDSKSLYS) and 503-541 (EVETDPSSFDMNTLMQPEREEESDSEYEEEEDDDDEEFA). Positions 85-99 (GRDRDRDKDKGRDSK) are enriched in basic and acidic residues. Residues 507–517 (DPSSFDMNTLM) are compositionally biased toward polar residues. The span at 521-541 (REEESDSEYEEEEDDDDEEFA) shows a compositional bias: acidic residues.

Belongs to the mTERF family.

It is found in the plastid. It localises to the chloroplast. Its subcellular location is the mitochondrion. In terms of biological role, transcription termination factor required for processing and steady-state levels of plastid transcripts. Required for splicing of the chloroplastic Clp protease (ClpP) group IIa intron. Required for maturation of 16S rRNA and 23S rRNA in the chloroplast. Essential for embryogenesis. Required for the maintenance of the correct levels of transcripts in the mitochondria and chloroplasts. The chain is Transcription termination factor MTERF4, chloroplastic from Arabidopsis thaliana (Mouse-ear cress).